The chain runs to 346 residues: MNPRATPVLVLSLALGTTITISSNHWVLAWTGLEINTLAIIPLISKSHHPRAVEAATKYFLTQAAASALVLFSSMTNAWATGQWDITQLNHPTSCLLLTAAIAIKLGLVPFHFWFPEVLQGSPLMTALLLSTLMKFPPLTLLLMTSKSLNPALLTAMALASTALGGWMGLNQTQTRKILAFSSISHLGWIAIILVYSPKLALLTFYLYTIMTSAVFMALNKIKALNLSMILISWTKTPVLNTTLMLVLLSLAGLPPLTGFMPKWLIIQELTKQEMTPAAMAIAMLSLLSLFFYLRLAYHSTITLPPNSSNHMKQWYTSKPPSTPTAILASLSILLLPLSPMVHAIV.

The next 10 helical transmembrane spans lie at 25–45 (HWVLAWTGLEINTLAIIPLIS), 60–80 (FLTQAAASALVLFSSMTNAWA), 95–115 (CLLLTAAIAIKLGLVPFHFWF), 124–144 (LMTALLLSTLMKFPPLTLLLM), 149–169 (LNPALLTAMALASTALGGWMG), 178–195 (ILAFSSISHLGWIAIILV), 200–219 (LALLTFYLYTIMTSAVFMAL), 247–267 (VLLSLAGLPPLTGFMPKWLII), 274–294 (EMTPAAMAIAMLSLLSLFFYL), and 326–346 (AILASLSILLLPLSPMVHAIV).

This sequence belongs to the complex I subunit 2 family.

The protein localises to the mitochondrion inner membrane. It catalyses the reaction a ubiquinone + NADH + 5 H(+)(in) = a ubiquinol + NAD(+) + 4 H(+)(out). Functionally, core subunit of the mitochondrial membrane respiratory chain NADH dehydrogenase (Complex I) that is believed to belong to the minimal assembly required for catalysis. Complex I functions in the transfer of electrons from NADH to the respiratory chain. The immediate electron acceptor for the enzyme is believed to be ubiquinone. This Anas capensis (Cape teal) protein is NADH-ubiquinone oxidoreductase chain 2 (MT-ND2).